The following is a 467-amino-acid chain: 3-isopropylmalate dehydratase large subunit (467 aa).

Positions 347, 407, and 410 each coordinate [4Fe-4S] cluster.

It belongs to the aconitase/IPM isomerase family. LeuC type 1 subfamily. As to quaternary structure, heterodimer of LeuC and LeuD. [4Fe-4S] cluster serves as cofactor.

It carries out the reaction (2R,3S)-3-isopropylmalate = (2S)-2-isopropylmalate. It functions in the pathway amino-acid biosynthesis; L-leucine biosynthesis; L-leucine from 3-methyl-2-oxobutanoate: step 2/4. In terms of biological role, catalyzes the isomerization between 2-isopropylmalate and 3-isopropylmalate, via the formation of 2-isopropylmaleate. The protein is 3-isopropylmalate dehydratase large subunit of Picosynechococcus sp. (strain ATCC 27264 / PCC 7002 / PR-6) (Agmenellum quadruplicatum).